The chain runs to 284 residues: Heat stress transcription factor B-1 (284 aa).

The DNA-binding element occupies 12-106 (PAPFLSKTYQ…LLTDIRRRKS (95 aa)). The disordered stretch occupies residues 118-151 (VGSPSESNSGGGDDHGSSSTSSPGSSKNPGSVEN). Over residues 134-148 (SSSTSSPGSSKNPGS) the composition is skewed to low complexity. The interval 147 to 192 (GSVENMVADLSGENEKLKRENNNLSSELAAAKKQRDELVTFLTGHL) is hydrophobic repeat HR-A/B. The Nuclear localization signal signature appears at 247–252 (RKKRDR).

This sequence belongs to the HSF family. Class B subfamily. Homotrimer. Exhibits temperature-dependent phosphorylation.

It localises to the nucleus. In terms of biological role, transcriptional regulator that specifically binds DNA sequence 5'-AGAAnnTTCT-3' known as heat shock promoter elements (HSE). The protein is Heat stress transcription factor B-1 (HSFB1) of Arabidopsis thaliana (Mouse-ear cress).